The chain runs to 217 residues: Octanoyltransferase (217 aa).

The BPL/LPL catalytic domain occupies 32-207; sequence SESHDELWIV…TFSQLLGYQH (176 aa). Substrate-binding positions include 71-78, 138-140, and 151-153; these read RGGQVTYH, SLG, and GLA. The active-site Acyl-thioester intermediate is Cys-169.

Belongs to the LipB family.

The protein localises to the cytoplasm. The enzyme catalyses octanoyl-[ACP] + L-lysyl-[protein] = N(6)-octanoyl-L-lysyl-[protein] + holo-[ACP] + H(+). It participates in protein modification; protein lipoylation via endogenous pathway; protein N(6)-(lipoyl)lysine from octanoyl-[acyl-carrier-protein]: step 1/2. In terms of biological role, catalyzes the transfer of endogenously produced octanoic acid from octanoyl-acyl-carrier-protein onto the lipoyl domains of lipoate-dependent enzymes. Lipoyl-ACP can also act as a substrate although octanoyl-ACP is likely to be the physiological substrate. The chain is Octanoyltransferase from Shewanella baltica (strain OS155 / ATCC BAA-1091).